Here is a 250-residue protein sequence, read N- to C-terminus: 5-oxoprolinase subunit A (250 aa).

This sequence belongs to the LamB/PxpA family. Forms a complex composed of PxpA, PxpB and PxpC.

It carries out the reaction 5-oxo-L-proline + ATP + 2 H2O = L-glutamate + ADP + phosphate + H(+). Its function is as follows. Catalyzes the cleavage of 5-oxoproline to form L-glutamate coupled to the hydrolysis of ATP to ADP and inorganic phosphate. This Streptomyces coelicolor (strain ATCC BAA-471 / A3(2) / M145) protein is 5-oxoprolinase subunit A.